The primary structure comprises 57 residues: Enolase (57 aa).

Glutamate 25 acts as the Proton donor in catalysis.

The protein belongs to the enolase family. Mg(2+) serves as cofactor.

The protein resides in the cytoplasm. It is found in the secreted. Its subcellular location is the cell surface. It carries out the reaction (2R)-2-phosphoglycerate = phosphoenolpyruvate + H2O. It functions in the pathway carbohydrate degradation; glycolysis; pyruvate from D-glyceraldehyde 3-phosphate: step 4/5. Functionally, catalyzes the reversible conversion of 2-phosphoglycerate (2-PG) into phosphoenolpyruvate (PEP). It is essential for the degradation of carbohydrates via glycolysis. This Clostridioides difficile (Peptoclostridium difficile) protein is Enolase.